Consider the following 559-residue polypeptide: Chaperonin GroEL 1 (559 aa).

Residues 29-32 (TIGP), 86-90 (DGTTT), glycine 413, 476-478 (NAL), and aspartate 492 each bind ATP. The tract at residues 521-541 (KPEPPAPAPAGDGDPMGGMGG) is disordered.

This sequence belongs to the chaperonin (HSP60) family. As to quaternary structure, forms a cylinder of 14 subunits composed of two heptameric rings stacked back-to-back. Interacts with the co-chaperonin GroES.

It localises to the cytoplasm. The catalysed reaction is ATP + H2O + a folded polypeptide = ADP + phosphate + an unfolded polypeptide.. In terms of biological role, together with its co-chaperonin GroES, plays an essential role in assisting protein folding. The GroEL-GroES system forms a nano-cage that allows encapsulation of the non-native substrate proteins and provides a physical environment optimized to promote and accelerate protein folding. In Synechococcus sp. (strain CC9605), this protein is Chaperonin GroEL 1.